Consider the following 153-residue polypeptide: UPF0260 protein YcgN (153 aa).

This sequence belongs to the UPF0260 family.

In Salmonella typhi, this protein is UPF0260 protein YcgN.